A 598-amino-acid polypeptide reads, in one-letter code: Nuclear receptor subfamily 4 group A member 2 (598 aa).

A disordered region spans residues Met1 to Tyr22. Polar residues predominate over residues Gln7–Ala18. A DNA-binding region (nuclear receptor) is located at residues Glu260 to Thr335. NR C4-type zinc fingers lie at residues Cys263–Cys283 and Cys299–Cys318. Positions Phe287–Arg314 match the Bipartite nuclear localization signal (NLS1) motif. Residues Ser337–Pro361 are disordered. The Nuclear localization signal (NLS1) signature appears at Leu338–Lys350. Over residues Pro352–Pro361 the composition is skewed to pro residues. The 236-residue stretch at Pro360–Thr595 folds into the NR LBD domain. The nuclear export sequence (NES1) motif lies at Phe443–Ala452. Positions Gln568 to Lys577 match the nuclear export sequence (NES2) motif.

Belongs to the nuclear hormone receptor family. As to quaternary structure, interacts with SFPQ, NCOR2, SIN3A and HADC1. The interaction with NCOR2 increases in the absence of PITX3. Interacts with PER2.

Its subcellular location is the cytoplasm. It localises to the nucleus. Functionally, transcriptional regulator which is important for the differentiation and maintenance of meso-diencephalic dopaminergic (mdDA) neurons during development. It is crucial for expression of a set of genes such as SLC6A3, SLC18A2, TH and DRD2 which are essential for development of mdDA neurons. The chain is Nuclear receptor subfamily 4 group A member 2 (NR4A2) from Pongo abelii (Sumatran orangutan).